A 461-amino-acid polypeptide reads, in one-letter code: Anthocyanidin 3-O-glucoside 5-O-glucosyltransferase (461 aa).

The first 15 residues, 1-15 (MSRAHVLLATFPAQG), serve as a signal peptide directing secretion. H16 serves as the catalytic Proton acceptor. H16 contributes to the an anthocyanidin binding site. Positions 338, 353, 356, 357, 358, 361, 377, and 378 each coordinate UDP-alpha-D-glucose.

The protein belongs to the UDP-glycosyltransferase family.

The enzyme catalyses an anthocyanidin 3-O-beta-D-glucoside + UDP-alpha-D-glucose = an anthocyanidin 3,5-di-O-beta-D-glucoside + UDP + 2 H(+). The protein operates within pigment biosynthesis; anthocyanin biosynthesis. Catalyzes the glucosylation at the O-5 position of anthocyanidin 3-glucosides to form anthocyanidin 3,5-di-O-glucosides using UDP-glucose as sugar donor. Anthocyanidin 3,5-di-O-glucosides are molecules that are responsible for pigmentation. Also acts on anthocyanidin 3-O-(6-O-malonylglucoside). Much less active with hydroxycinnamoylglucose derivatives. No activity in the absence of the 3-O-glucoside group. The sequence is that of Anthocyanidin 3-O-glucoside 5-O-glucosyltransferase (HGT8) from Verbena hybrida (Garden vervain).